Reading from the N-terminus, the 560-residue chain is Synaptotagmin-5 (560 aa).

Residues 2–22 (GFIVGVVIGLLVGIAIIIGFV) traverse the membrane as a helical segment. Positions 67 to 249 (ERQKLTWLNH…WPVRKVIPII (183 aa)) constitute an SMP-LTD domain. Residues 227–523 (EETIRDAVED…YIGRCILTLT (297 aa)) are phospholipid binding. C2 domains are found at residues 243–364 (RKVI…DVWL) and 417–535 (TTDE…KDWY). Ca(2+)-binding residues include Asp-278, Asp-284, Asp-334, Glu-336, Asp-451, Asp-457, Asp-506, Asp-508, and Asp-513.

Belongs to the synaptotagmin family. Ca(2+) serves as cofactor.

Its subcellular location is the membrane. May be involved in membrane trafficking. The sequence is that of Synaptotagmin-5 (SYT5) from Arabidopsis thaliana (Mouse-ear cress).